A 356-amino-acid chain; its full sequence is MNKKNLLSFNQNALNDFFVGLGEKPYRTKQIMQWIYKDHEFDFEKMLNFSKSLRDELSKVVCVELLRVVKQNFILDGVIKWVLALDKNNHIEMIYIPEKNRGTLCISSQVGCGLACTFCSTGMQGFNKNLTTAEIIAQVLIASRYLNSKTKRISNVVFMGMGEPLLNEHAVYNACDLLLDDLAFGLSRRKVTISTSGVVPAMLRMSERTPVSLAVSLHASDDHLRNELVPINQKYSLEELLKACKVYLQAGTQKRHILFEYVMLKGVNDSIEHANKLVKLLKGISAKINLIPFNSFEKTQYQTSSAQTIEKFQNILYHQGIRTMTRRTRGEDIGGACGQLAGKVLDKTKRTYDRRH.

The active-site Proton acceptor is the glutamate 92. In terms of domain architecture, Radical SAM core spans 98–327; the sequence is EKNRGTLCIS…HQGIRTMTRR (230 aa). Residues cysteine 105 and cysteine 337 are joined by a disulfide bond. [4Fe-4S] cluster is bound by residues cysteine 112, cysteine 116, and cysteine 119. Residues 162 to 163, serine 194, 216 to 218, and asparagine 294 each bind S-adenosyl-L-methionine; these read GE and SLH. The S-methylcysteine intermediate role is filled by cysteine 337.

Belongs to the radical SAM superfamily. RlmN family. It depends on [4Fe-4S] cluster as a cofactor.

The protein localises to the cytoplasm. The catalysed reaction is adenosine(2503) in 23S rRNA + 2 reduced [2Fe-2S]-[ferredoxin] + 2 S-adenosyl-L-methionine = 2-methyladenosine(2503) in 23S rRNA + 5'-deoxyadenosine + L-methionine + 2 oxidized [2Fe-2S]-[ferredoxin] + S-adenosyl-L-homocysteine. It carries out the reaction adenosine(37) in tRNA + 2 reduced [2Fe-2S]-[ferredoxin] + 2 S-adenosyl-L-methionine = 2-methyladenosine(37) in tRNA + 5'-deoxyadenosine + L-methionine + 2 oxidized [2Fe-2S]-[ferredoxin] + S-adenosyl-L-homocysteine. Its function is as follows. Specifically methylates position 2 of adenine 2503 in 23S rRNA and position 2 of adenine 37 in tRNAs. m2A2503 modification seems to play a crucial role in the proofreading step occurring at the peptidyl transferase center and thus would serve to optimize ribosomal fidelity. This chain is Dual-specificity RNA methyltransferase RlmN, found in Ruthia magnifica subsp. Calyptogena magnifica.